Consider the following 169-residue polypeptide: Lutropin/choriogonadotropin subunit beta (169 aa).

The first 20 residues, 1-20, serve as a signal peptide directing secretion; sequence MEMLQGLLLWMLLSVGGVWA. 6 disulfides stabilise this stretch: Cys-29–Cys-77, Cys-43–Cys-92, Cys-46–Cys-130, Cys-54–Cys-108, Cys-58–Cys-110, and Cys-113–Cys-120. A glycan (N-linked (GlcNAc...) asparagine) is linked at Asn-33. Residues 131–169 form a disordered region; it reads APQASSSSKDPPSQPLTSTSTPTPGASNRSSHPLPIKTS. Positions 145–154 are enriched in low complexity; the sequence is PLTSTSTPTP. A compositionally biased stretch (polar residues) spans 155–169; that stretch reads GASNRSSHPLPIKTS. N-linked (GlcNAc...) asparagine glycosylation is present at Asn-158.

This sequence belongs to the glycoprotein hormones subunit beta family. Heterodimer of a common alpha chain and a unique beta chain which confers biological specificity to thyrotropin, lutropin, follitropin and gonadotropin.

It is found in the secreted. In terms of biological role, promotes spermatogenesis and ovulation by stimulating the testes and ovaries to synthesize steroids. The protein is Lutropin/choriogonadotropin subunit beta (LHB) of Equus quagga burchellii (Burchell's zebra).